The sequence spans 291 residues: Putative heme-binding peroxidase (291 aa).

Catalysis depends on His-61, which acts as the Proton acceptor. His-185 contributes to the heme b binding site. The Tryptophan radical intermediate role is filled by Trp-201.

Belongs to the peroxidase family. Cytochrome c peroxidase subfamily. It depends on heme b as a cofactor.

Destroys radicals which are normally produced within the cells and which are toxic to biological systems. This chain is Putative heme-binding peroxidase (CCP2), found in Candida albicans (strain SC5314 / ATCC MYA-2876) (Yeast).